We begin with the raw amino-acid sequence, 452 residues long: Bifunctional protein GlmU (452 aa).

Residues 1 to 226 form a pyrophosphorylase region; it reads MAFSVVVLAA…AVEVEGVNNR (226 aa). UDP-N-acetyl-alpha-D-glucosamine contacts are provided by residues 8-11, K22, Q73, and 78-79; these read LAAG and GT. D102 is a binding site for Mg(2+). UDP-N-acetyl-alpha-D-glucosamine-binding residues include G137, E151, N166, and N224. N224 provides a ligand contact to Mg(2+). The tract at residues 227 to 247 is linker; the sequence is LQLANLERALQNRQADELMTN. An N-acetyltransferase region spans residues 248 to 452; that stretch reads GVTLLDPSRF…IPNWPRPTKK (205 aa). The UDP-N-acetyl-alpha-D-glucosamine site is built by R330 and K348. The active-site Proton acceptor is the H360. Residues Y363 and N374 each contribute to the UDP-N-acetyl-alpha-D-glucosamine site. Acetyl-CoA contacts are provided by residues A377, 383–384, S402, A420, and R437; that span reads NY.

It in the N-terminal section; belongs to the N-acetylglucosamine-1-phosphate uridyltransferase family. In the C-terminal section; belongs to the transferase hexapeptide repeat family. As to quaternary structure, homotrimer. Mg(2+) is required as a cofactor.

The protein resides in the cytoplasm. The catalysed reaction is alpha-D-glucosamine 1-phosphate + acetyl-CoA = N-acetyl-alpha-D-glucosamine 1-phosphate + CoA + H(+). The enzyme catalyses N-acetyl-alpha-D-glucosamine 1-phosphate + UTP + H(+) = UDP-N-acetyl-alpha-D-glucosamine + diphosphate. The protein operates within nucleotide-sugar biosynthesis; UDP-N-acetyl-alpha-D-glucosamine biosynthesis; N-acetyl-alpha-D-glucosamine 1-phosphate from alpha-D-glucosamine 6-phosphate (route II): step 2/2. Its pathway is nucleotide-sugar biosynthesis; UDP-N-acetyl-alpha-D-glucosamine biosynthesis; UDP-N-acetyl-alpha-D-glucosamine from N-acetyl-alpha-D-glucosamine 1-phosphate: step 1/1. It participates in bacterial outer membrane biogenesis; LPS lipid A biosynthesis. Functionally, catalyzes the last two sequential reactions in the de novo biosynthetic pathway for UDP-N-acetylglucosamine (UDP-GlcNAc). The C-terminal domain catalyzes the transfer of acetyl group from acetyl coenzyme A to glucosamine-1-phosphate (GlcN-1-P) to produce N-acetylglucosamine-1-phosphate (GlcNAc-1-P), which is converted into UDP-GlcNAc by the transfer of uridine 5-monophosphate (from uridine 5-triphosphate), a reaction catalyzed by the N-terminal domain. The protein is Bifunctional protein GlmU of Alteromonas mediterranea (strain DSM 17117 / CIP 110805 / LMG 28347 / Deep ecotype).